The primary structure comprises 89 residues: Small ribosomal subunit protein uS15 (89 aa).

The protein belongs to the universal ribosomal protein uS15 family. Part of the 30S ribosomal subunit. Forms a bridge to the 50S subunit in the 70S ribosome, contacting the 23S rRNA.

One of the primary rRNA binding proteins, it binds directly to 16S rRNA where it helps nucleate assembly of the platform of the 30S subunit by binding and bridging several RNA helices of the 16S rRNA. In terms of biological role, forms an intersubunit bridge (bridge B4) with the 23S rRNA of the 50S subunit in the ribosome. This is Small ribosomal subunit protein uS15 from Bifidobacterium adolescentis (strain ATCC 15703 / DSM 20083 / NCTC 11814 / E194a).